We begin with the raw amino-acid sequence, 261 residues long: Acetylglutamate kinase (261 aa).

Residues 48-49, Arg70, and Asn164 each bind substrate; that span reads GG.

This sequence belongs to the acetylglutamate kinase family. ArgB subfamily.

It is found in the cytoplasm. It catalyses the reaction N-acetyl-L-glutamate + ATP = N-acetyl-L-glutamyl 5-phosphate + ADP. Its pathway is amino-acid biosynthesis; L-arginine biosynthesis; N(2)-acetyl-L-ornithine from L-glutamate: step 2/4. Catalyzes the ATP-dependent phosphorylation of N-acetyl-L-glutamate. The sequence is that of Acetylglutamate kinase from Roseiflexus sp. (strain RS-1).